A 191-amino-acid chain; its full sequence is Peptidyl-tRNA hydrolase (191 aa).

Tyr17 provides a ligand contact to tRNA. Residue His22 is the Proton acceptor of the active site. 3 residues coordinate tRNA: Tyr68, Asn70, and Asn116.

It belongs to the PTH family. In terms of assembly, monomer.

The protein localises to the cytoplasm. The catalysed reaction is an N-acyl-L-alpha-aminoacyl-tRNA + H2O = an N-acyl-L-amino acid + a tRNA + H(+). Hydrolyzes ribosome-free peptidyl-tRNAs (with 1 or more amino acids incorporated), which drop off the ribosome during protein synthesis, or as a result of ribosome stalling. In terms of biological role, catalyzes the release of premature peptidyl moieties from peptidyl-tRNA molecules trapped in stalled 50S ribosomal subunits, and thus maintains levels of free tRNAs and 50S ribosomes. The chain is Peptidyl-tRNA hydrolase from Mycobacterium avium (strain 104).